Reading from the N-terminus, the 618-residue chain is MLTEALVAVRQGTQTPAAQTTCAPSTMSSSSRPPLETLQAQSVSADETPGSALPACAQPCETARSATPTGGETPNRSRYLSHRGNSIRQQQGILQEGFLLYSLDKFHETDKPDGIINLGTSENKLCHDLLHERLTRPDMLLLDPPLLQYPDWSGHQFLREEVAKFLTDYCCSPKPLKAENVVVMNGCASLFSCIASVICDPKDAILISTPFYGAITEHLGLYSDVKLYHIHLDCEASGEDGRLFHLTVDKLEEGLRRAEHEGFIVRGLVLMNPHNPLADIYTPKEMVGFLEFAKRNELHTIVDEVYMLSVFDESVTFDSVLSLESVPDPQRTHVMWGLGKDFAMAGIRVGTLYSESRDLVEAVAKLGAFHGIPGTTQRQVAQLLQDREWIDTQYLPRNRSRLKAARSYVTGELRGLDVPYLDRSAAMFVWADLRKFLAEPSFEEEMRLWRHFLKHKVVLSCGQAFSCSTPGWFRIVFSDQDRRLKLGMKRIKEALEEYKDQITVTDCYSIKDGGPRVRASGKDSDNAAIVGSTLPQGKSSDMLEEKDHTVQAGLGADELVLRDCQPSKPAEGLDSLIGTLRHQIRSSDWLEKNTPELSAGEDPEILDVFKALLERARK.

A compositionally biased stretch (low complexity) spans 11–26 (QGTQTPAAQTTCAPST). Residues 11 to 54 (QGTQTPAAQTTCAPSTMSSSSRPPLETLQAQSVSADETPGSALP) are disordered. Positions 27 to 45 (MSSSSRPPLETLQAQSVSA) are enriched in polar residues. Glu122 is a binding site for substrate. The residue at position 340 (Lys340) is an N6-(pyridoxal phosphate)lysine.

It belongs to the class-I pyridoxal-phosphate-dependent aminotransferase family.

In Takifugu rubripes (Japanese pufferfish), this protein is 1-aminocyclopropane-1-carboxylate synthase-like protein 1 (accs).